The primary structure comprises 132 residues: Aspartate 1-decarboxylase (132 aa).

The active-site Schiff-base intermediate with substrate; via pyruvic acid is the serine 25. Serine 25 bears the Pyruvic acid (Ser) mark. Position 57 (threonine 57) interacts with substrate. The active-site Proton donor is tyrosine 58. Residue 73-75 participates in substrate binding; that stretch reads GAA.

Belongs to the PanD family. As to quaternary structure, heterooctamer of four alpha and four beta subunits. Requires pyruvate as cofactor. Is synthesized initially as an inactive proenzyme, which is activated by self-cleavage at a specific serine bond to produce a beta-subunit with a hydroxyl group at its C-terminus and an alpha-subunit with a pyruvoyl group at its N-terminus.

It localises to the cytoplasm. It catalyses the reaction L-aspartate + H(+) = beta-alanine + CO2. It participates in cofactor biosynthesis; (R)-pantothenate biosynthesis; beta-alanine from L-aspartate: step 1/1. In terms of biological role, catalyzes the pyruvoyl-dependent decarboxylation of aspartate to produce beta-alanine. The protein is Aspartate 1-decarboxylase of Pelotomaculum thermopropionicum (strain DSM 13744 / JCM 10971 / SI).